Here is a 363-residue protein sequence, read N- to C-terminus: 5-hydroxytryptamine receptor 1E (363 aa).

The Extracellular segment spans residues 1–21 (MNITNCTTEASMAIRPKTITE). 2 N-linked (GlcNAc...) asparagine glycosylation sites follow: asparagine 2 and asparagine 5. Residues 22-45 (KMLICMTLVVITTLTTLLNLAVIM) traverse the membrane as a helical segment. The Cytoplasmic portion of the chain corresponds to 46 to 59 (AIGTTKKLHQPANY). Residues 60–84 (LICSLAVTDLLVAVLVMPLSIIYIV) form a helical membrane-spanning segment. Residues 85 to 92 (MDRWKLGY) are Extracellular-facing. The chain crosses the membrane as a helical span at residues 93-118 (FLCEVWLSVDMTCCTCSILHLCVIAL). Residues cysteine 95 and cysteine 173 are joined by a disulfide bond. Positions 102 and 106 each coordinate serotonin. Positions 119–121 (DRY) match the DRY motif; important for ligand-induced conformation changes motif. The Cytoplasmic segment spans residues 119 to 138 (DRYWAITNAIEYARKRTAKR). The helical transmembrane segment at 139–157 (AALMILTVWTISIFISMPP) threads the bilayer. Residues 158-179 (LFWRSHRRLSPPPSQCTIQHDH) lie on the Extracellular side of the membrane. The helical transmembrane segment at 180–203 (VIYTIYSTLGAFYIPLTLILILYY) threads the bilayer. Residues 204–291 (RIYHAAKSLY…SSTRERKAAR (88 aa)) are Cytoplasmic-facing. Residues 292–316 (ILGLILGAFILSWLPFFIKELIVGL) traverse the membrane as a helical segment. Over 317–322 (SIYTVS) the chain is Extracellular. Residues 323–345 (SEVADFLTWLGYVNSLINPLLYT) traverse the membrane as a helical segment. The NPxxY motif; important for ligand-induced conformation changes and signaling signature appears at 340-344 (NPLLY). Residues 346–363 (SFNEDFKLAFKKLIRCRE) lie on the Cytoplasmic side of the membrane.

It belongs to the G-protein coupled receptor 1 family.

The protein localises to the cell membrane. In terms of biological role, G-protein coupled receptor for 5-hydroxytryptamine (serotonin). Also functions as a receptor for various alkaloids and psychoactive substances. Ligand binding causes a conformation change that triggers signaling via guanine nucleotide-binding proteins (G proteins) and modulates the activity of downstream effectors, such as adenylate cyclase. HTR1E is coupled to G(i)/G(o) G alpha proteins and mediates inhibitory neurotransmission by inhibiting adenylate cyclase activity. The protein is 5-hydroxytryptamine receptor 1E (HTR1E) of Pan troglodytes (Chimpanzee).